The sequence spans 645 residues: Putative galactocerebrosidase (645 aa).

The first 16 residues, 1–16 (MFSIFIKIILILPSIA), serve as a signal peptide directing secretion. Positions 87 and 128 each coordinate substrate. N-linked (GlcNAc...) asparagine glycosylation is present at N141. Residue N171 coordinates substrate. E172 serves as the catalytic Proton donor/acceptor. N-linked (GlcNAc...) asparagine glycosylation is found at N174 and N193. E248 acts as the Nucleophile in catalysis. An intrachain disulfide couples C261 to C365. N-linked (GlcNAc...) asparagine glycans are attached at residues N274, N395, N411, N532, N616, N620, and N638.

Belongs to the glycosyl hydrolase 59 family.

The enzyme catalyses a beta-D-Gal-(1&lt;-&gt;1')-ceramide + H2O = an N-acyl-sphingoid base + D-galactose. It carries out the reaction a beta-D-galactosyl-(1&lt;-&gt;1')-N-acylsphing-4-enine + H2O = an N-acylsphing-4-enine + D-galactose. Hydrolyzes the galactose ester bonds of galactosylceramide, galactosylsphingoid base, lactosylceramide, and monogalactosyldiglyceride. C.elegans contain specific sphingoid bases, which are unique or different in structure compared to the sphingoid bases found in other animals. Two examples of these distinctive compounds are: 15-methylhexadecasphinganine and 15-methylhexadecasphing-4-enine. The sequence is that of Putative galactocerebrosidase from Caenorhabditis elegans.